We begin with the raw amino-acid sequence, 334 residues long: MNLLLLLAVLCLGTALATPKFDQTFSAEWHQWKSTHRRLYGTNEEEWRRAIWEKNMRMIQLHNGEYSNGQHGFSMEMNAFGDMTNEEFRQVVNGYRHQKHKKGRLFQEPLMLKIPKSVDWREKGCVTPVKNQGQCGSCWAFSASGCLEGQMFLKTGKLISLSEQNLVDCSHAQGNQGCNGGLMDFAFQYIKENGGLDSEESYPYEAKDGSCKYRAEFAVANDTGFVDIPQQEKALMKAVATVGPISVAMDASHPSLQFYSSGIYYEPNCSSKNLDHGVLLVGYGYEGTDSNKNKYWLVKNSWGSEWGMEGYIKIAKDRDNHCGLATAASYPVVN.

A signal peptide spans 1 to 17 (MNLLLLLAVLCLGTALA). A propeptide spans 18–113 (TPKFDQTFSA…RLFQEPLMLK (96 aa)) (activation peptide). Glutamate 122 is a binding site for Zn(2+). 2 cysteine pairs are disulfide-bonded: cysteine 135–cysteine 178 and cysteine 169–cysteine 211. Cysteine 138 is a catalytic residue. Zn(2+)-binding residues include glutamate 163, aspartate 184, glutamate 199, and glutamate 205. N-linked (GlcNAc...) (high mannose) asparagine glycosylation occurs at asparagine 221. The Zn(2+) site is built by aspartate 227, aspartate 250, histidine 253, and aspartate 275. An intrachain disulfide couples cysteine 269 to cysteine 322. Residue histidine 276 is part of the active site. Positions 289–290 (DS) are excised as a propeptide. Residue asparagine 300 is part of the active site.

The protein belongs to the peptidase C1 family. In terms of assembly, dimer of a heavy and a light chain linked by disulfide bonds. Interacts with Long isoform of CD74/Ii chain; the interaction stabilizes the conformation of mature CTSL. During export along the endocytic pathway, pro-CTSL undergoes several proteolytic cleavages to generate the CTSL single-chain and two-chain mature forms, composed of a heavy chain linked to a light chain by disulfide bonds. Autocleavage; produces the single-chain CTSL after cleavage of the propeptide. The cleavage can be intermolecular. Expressed in thymus, kidney and liver. Expressed in thyroid epithelial cells. Expressed in cortical thymic epithelial cells. Expressed by antigen presenting cells (APCs) such as dendritic cells and macrophages.

It is found in the lysosome. The protein localises to the apical cell membrane. It localises to the secreted. The protein resides in the extracellular space. Its subcellular location is the cytoplasmic vesicle. It is found in the secretory vesicle. The protein localises to the chromaffin granule. It carries out the reaction Specificity close to that of papain. As compared to cathepsin B, cathepsin L exhibits higher activity toward protein substrates, but has little activity on Z-Arg-Arg-NHMec, and no peptidyl-dipeptidase activity.. Its activity is regulated as follows. Long isoform of CD74/Ii chain stabilizes the conformation of mature CTSL by binding to its active site and serving as a chaperone to help maintain a pool of mature enzyme in endocytic compartments and extracellular space of APCs. IFNG enhances the conversion into the CTSL mature and active form. Inhibited by CST6. Inhibited by the glycopeptide antibiotic teicoplanin. Inhibited by amantadine. Thiol protease important for the overall degradation of proteins in lysosomes. Involved in the solubilization of cross-linked TG/thyroglobulin and in the subsequent release of thyroid hormone thyroxine (T4) by limited proteolysis of TG/thyroglobulin in the thyroid follicle lumen. In neuroendocrine chromaffin cells secretory vesicles, catalyzes the prohormone proenkephalin processing to the active enkephalin peptide neurotransmitter. In thymus, regulates CD4(+) T cell positive selection by generating the major histocompatibility complex class II (MHCII) bound peptide ligands presented by cortical thymic epithelial cells. Also mediates invariant chain processing in cortical thymic epithelial cells. Major elastin-degrading enzyme at neutral pH. Accumulates as a mature and active enzyme in the extracellular space of antigen presenting cells (APCs) to regulate degradation of the extracellular matrix in the course of inflammation. Secreted form generates endostatin from COL18A1. Critical for cardiac morphology and function. Plays an important role in hair follicle morphogenesis and cycling, as well as epidermal differentiation. Required for maximal stimulation of steroidogenesis by TIMP1. The polypeptide is Procathepsin L (Mus musculus (Mouse)).